Here is an 83-residue protein sequence, read N- to C-terminus: Three-finger toxin MALT0066C (83 aa).

The first 21 residues, 1–21, serve as a signal peptide directing secretion; it reads MKTLLLTLVVVTIVCLDFGHT. Disulfide bonds link cysteine 24-cysteine 45, cysteine 38-cysteine 62, cysteine 64-cysteine 75, and cysteine 76-cysteine 81.

This sequence belongs to the three-finger toxin family. Short-chain subfamily. Type I alpha-neurotoxin sub-subfamily. Dimer. In terms of tissue distribution, expressed by the venom gland.

The protein resides in the secreted. Its function is as follows. Binds to muscle nicotinic acetylcholine receptor (nAChR) and inhibit acetylcholine from binding to the receptor, thereby impairing neuromuscular transmission. The protein is Three-finger toxin MALT0066C of Micrurus altirostris (Uruguayan coral snake).